The primary structure comprises 626 residues: tRNA uridine 5-carboxymethylaminomethyl modification enzyme MnmG (626 aa).

G14–G19 provides a ligand contact to FAD. NAD(+) is bound at residue G273 to F287.

The protein belongs to the MnmG family. Homodimer. Heterotetramer of two MnmE and two MnmG subunits. The cofactor is FAD.

It localises to the cytoplasm. In terms of biological role, NAD-binding protein involved in the addition of a carboxymethylaminomethyl (cmnm) group at the wobble position (U34) of certain tRNAs, forming tRNA-cmnm(5)s(2)U34. In Caldicellulosiruptor saccharolyticus (strain ATCC 43494 / DSM 8903 / Tp8T 6331), this protein is tRNA uridine 5-carboxymethylaminomethyl modification enzyme MnmG.